The primary structure comprises 320 residues: Dual oxidase maturation factor 2 (320 aa).

At 1 to 21 (MTLWNGVLPFYPQPRHAAGFS) the chain is on the extracellular side. The helical transmembrane segment at 22-42 (VPLLIVILVFLALAASFLLIL) threads the bilayer. The Cytoplasmic segment spans residues 43–56 (PGIRGHSRWFWLVR). A helical membrane pass occupies residues 57-77 (VLLSLFIGAEIVAVHFSAEWF). Residues 78–183 (VGTVNTNTSY…HLAGHYASAT (106 aa)) lie on the Extracellular side of the membrane. N-linked (GlcNAc...) asparagine glycosylation is found at Asn84, Asn109, and Asn121. Residues 184–204 (LWVAFCFWLLSNVLLSTPAPL) form a helical membrane-spanning segment. The Cytoplasmic portion of the chain corresponds to 205-206 (YG). A helical transmembrane segment spans residues 207 to 227 (GLALLTTGAFALFGVFALASI). Residues 228 to 247 (SSVPLCPLRLGSSALTTQYG) are Extracellular-facing. Residues 248–268 (AAFWVTLATGVLCLFLGGAVV) form a helical membrane-spanning segment. Over 269–320 (SLQYVRPSALRTLLDQSAKDCSQERGGSPLILGDPLHKQAALPDLKCITTNL) the chain is Cytoplasmic.

It belongs to the DUOXA family. Heterodimer with DUXA2; disulfide-linked. Interacts with CSNK1G2. N-glycosylated. Specifically expressed in thyroid. Also detected in salivary glands.

The protein localises to the endoplasmic reticulum membrane. Required for the maturation and the transport from the endoplasmic reticulum to the plasma membrane of functional DUOX2. May play a role in thyroid hormone synthesis. The sequence is that of Dual oxidase maturation factor 2 (DUOXA2) from Homo sapiens (Human).